The sequence spans 139 residues: Exodeoxyribonuclease 7 small subunit (139 aa).

Disordered stretches follow at residues 1-26 and 82-139; these read MAKK…LGDF and DAEG…EDDE. Over residues 130 to 139 the composition is skewed to acidic residues; the sequence is ADLDSAEDDE.

Belongs to the XseB family. Heterooligomer composed of large and small subunits.

It localises to the cytoplasm. It catalyses the reaction Exonucleolytic cleavage in either 5'- to 3'- or 3'- to 5'-direction to yield nucleoside 5'-phosphates.. Its function is as follows. Bidirectionally degrades single-stranded DNA into large acid-insoluble oligonucleotides, which are then degraded further into small acid-soluble oligonucleotides. The sequence is that of Exodeoxyribonuclease 7 small subunit from Rhodopirellula baltica (strain DSM 10527 / NCIMB 13988 / SH1).